The following is an 83-amino-acid chain: Putative defensin-like protein 110 (83 aa).

The first 24 residues, 1 to 24, serve as a signal peptide directing secretion; that stretch reads MAITKKNLIAFVFTILFVISYVHC. 4 disulfides stabilise this stretch: C43/C81, C49/C73, C59/C79, and C63/C80.

This sequence belongs to the DEFL family.

It localises to the secreted. This is Putative defensin-like protein 110 from Arabidopsis thaliana (Mouse-ear cress).